We begin with the raw amino-acid sequence, 317 residues long: UAP56-interacting factor (317 aa).

N-acetylmethionine is present on Met-1. A disordered region spans residues 1–23 (MNRFGTRLVGATATTPPAPKARS). Thr-14 carries the post-translational modification Phosphothreonine. Ser-23 carries the post-translational modification Phosphoserine. The short motif at 26–44 (NLDKIDMSLDEIIKLNRKE) is the UAP56-binding motif element. Phosphoserine is present on residues Ser-60 and Ser-117. Lys-139 is covalently cross-linked (Glycyl lysine isopeptide (Lys-Gly) (interchain with G-Cter in SUMO1)). Lys-260 is covalently cross-linked (Glycyl lysine isopeptide (Lys-Gly) (interchain with G-Cter in SUMO2)).

It belongs to the UIF family. As to quaternary structure, interacts with DDX39B/UAP56 and NXF1; interaction with DDX39B/UAP56 and NXF1 are mutually exclusive. Interacts with SSRP1; required for its recruitment to mRNAs. Interacts with CHTOP.

It localises to the nucleus. The protein localises to the nucleoplasm. Its subcellular location is the nucleus speckle. Its function is as follows. Required for mRNA export from the nucleus to the cytoplasm. Acts as an adapter that uses the DDX39B/UAP56-NFX1 pathway to ensure efficient mRNA export and delivering to the nuclear pore. Associates with spliced and unspliced mRNAs simultaneously with ALYREF/THOC4. This chain is UAP56-interacting factor (Fyttd1), found in Rattus norvegicus (Rat).